Here is an 89-residue protein sequence, read N- to C-terminus: Small ribosomal subunit protein uS15 (89 aa).

Belongs to the universal ribosomal protein uS15 family. In terms of assembly, part of the 30S ribosomal subunit. Forms a bridge to the 50S subunit in the 70S ribosome, contacting the 23S rRNA.

Its function is as follows. One of the primary rRNA binding proteins, it binds directly to 16S rRNA where it helps nucleate assembly of the platform of the 30S subunit by binding and bridging several RNA helices of the 16S rRNA. Forms an intersubunit bridge (bridge B4) with the 23S rRNA of the 50S subunit in the ribosome. In Edwardsiella ictaluri (strain 93-146), this protein is Small ribosomal subunit protein uS15.